We begin with the raw amino-acid sequence, 146 residues long: Holo-[acyl-carrier-protein] synthase (146 aa).

Mg(2+) is bound by residues Asp-9 and Glu-63.

This sequence belongs to the P-Pant transferase superfamily. AcpS family. The cofactor is Mg(2+).

It is found in the cytoplasm. It catalyses the reaction apo-[ACP] + CoA = holo-[ACP] + adenosine 3',5'-bisphosphate + H(+). In terms of biological role, transfers the 4'-phosphopantetheine moiety from coenzyme A to a Ser of acyl-carrier-protein. The protein is Holo-[acyl-carrier-protein] synthase of Burkholderia ambifaria (strain ATCC BAA-244 / DSM 16087 / CCUG 44356 / LMG 19182 / AMMD) (Burkholderia cepacia (strain AMMD)).